We begin with the raw amino-acid sequence, 428 residues long: Enolase (428 aa).

Position 163 (Gln-163) interacts with (2R)-2-phosphoglycerate. The Proton donor role is filled by Glu-205. Residues Asp-242, Glu-285, and Asp-312 each coordinate Mg(2+). (2R)-2-phosphoglycerate is bound by residues Lys-337, Arg-366, Ser-367, and Lys-388. Lys-337 serves as the catalytic Proton acceptor.

The protein belongs to the enolase family. Mg(2+) is required as a cofactor.

It is found in the cytoplasm. Its subcellular location is the secreted. The protein localises to the cell surface. It carries out the reaction (2R)-2-phosphoglycerate = phosphoenolpyruvate + H2O. Its pathway is carbohydrate degradation; glycolysis; pyruvate from D-glyceraldehyde 3-phosphate: step 4/5. Functionally, catalyzes the reversible conversion of 2-phosphoglycerate (2-PG) into phosphoenolpyruvate (PEP). It is essential for the degradation of carbohydrates via glycolysis. This Neisseria meningitidis serogroup B (strain ATCC BAA-335 / MC58) protein is Enolase.